We begin with the raw amino-acid sequence, 158 residues long: NADH-quinone oxidoreductase subunit B (158 aa).

4 residues coordinate [4Fe-4S] cluster: Cys-37, Cys-38, Cys-102, and Cys-132.

It belongs to the complex I 20 kDa subunit family. NDH-1 is composed of 14 different subunits. Subunits NuoB, C, D, E, F, and G constitute the peripheral sector of the complex. [4Fe-4S] cluster is required as a cofactor.

It localises to the cell inner membrane. It catalyses the reaction a quinone + NADH + 5 H(+)(in) = a quinol + NAD(+) + 4 H(+)(out). Functionally, NDH-1 shuttles electrons from NADH, via FMN and iron-sulfur (Fe-S) centers, to quinones in the respiratory chain. The immediate electron acceptor for the enzyme in this species is believed to be ubiquinone. Couples the redox reaction to proton translocation (for every two electrons transferred, four hydrogen ions are translocated across the cytoplasmic membrane), and thus conserves the redox energy in a proton gradient. In Thioalkalivibrio sulfidiphilus (strain HL-EbGR7), this protein is NADH-quinone oxidoreductase subunit B.